Reading from the N-terminus, the 197-residue chain is Alkyl hydroperoxide reductase C (197 aa).

One can recognise a Thioredoxin domain in the interval 2 to 163; sequence VLVTQNAPNF…MIRMVDALDF (162 aa). The active-site Cysteine sulfenic acid (-SOH) intermediate is the C50.

It belongs to the peroxiredoxin family. AhpC/Prx1 subfamily. In terms of assembly, homodimer; disulfide-linked, upon oxidation. 5 homodimers assemble to form a ring-like decamer.

Its subcellular location is the cytoplasm. It catalyses the reaction a hydroperoxide + NADH + H(+) = an alcohol + NAD(+) + H2O. In terms of biological role, thiol-specific peroxidase that catalyzes the reduction of hydrogen peroxide and organic hydroperoxides to water and alcohols, respectively. Plays a role in cell protection against oxidative stress by detoxifying peroxides. In Buchnera aphidicola subsp. Acyrthosiphon pisum (strain APS) (Acyrthosiphon pisum symbiotic bacterium), this protein is Alkyl hydroperoxide reductase C.